A 186-amino-acid chain; its full sequence is Elongation factor P (186 aa).

It belongs to the elongation factor P family.

It localises to the cytoplasm. Its pathway is protein biosynthesis; polypeptide chain elongation. Involved in peptide bond synthesis. Stimulates efficient translation and peptide-bond synthesis on native or reconstituted 70S ribosomes in vitro. Probably functions indirectly by altering the affinity of the ribosome for aminoacyl-tRNA, thus increasing their reactivity as acceptors for peptidyl transferase. The polypeptide is Elongation factor P (Prochlorococcus marinus (strain MIT 9303)).